Reading from the N-terminus, the 167-residue chain is Small ribosomal subunit protein uS5 (167 aa).

Residues 11–74 enclose the S5 DRBM domain; that stretch reads LQEKLIAVNR…EKARRAMINV (64 aa).

It belongs to the universal ribosomal protein uS5 family. In terms of assembly, part of the 30S ribosomal subunit. Contacts proteins S4 and S8.

Functionally, with S4 and S12 plays an important role in translational accuracy. Located at the back of the 30S subunit body where it stabilizes the conformation of the head with respect to the body. In Yersinia pseudotuberculosis serotype O:1b (strain IP 31758), this protein is Small ribosomal subunit protein uS5.